A 174-amino-acid chain; its full sequence is Co-chaperone protein HscB (174 aa).

A J domain is found at Asp2–Leu74.

It belongs to the HscB family. In terms of assembly, interacts with HscA and stimulates its ATPase activity. Interacts with IscU.

In terms of biological role, co-chaperone involved in the maturation of iron-sulfur cluster-containing proteins. Seems to help targeting proteins to be folded toward HscA. The polypeptide is Co-chaperone protein HscB (Yersinia pseudotuberculosis serotype O:1b (strain IP 31758)).